Reading from the N-terminus, the 343-residue chain is MGKKRKITDEKDAQHVPAEKREKVENWLKKSTEKPTSSQSDAEKKKKRPWRNKVRKLAAKKAAADKKSENPEEPPLILEPKSSSDENTKKKRKRGPKKKKFKPEVAGKAAETENDDVAAAPEEADPIAEAKKRLDAGRFRFLNEKLYTCTGSEAFDFFKEDPTAFDLYHKGFADQVKKWPNHPLREIIRWLQSKPDQQSVFDLGCGEAKIAEAVGEKHKIRSFDLVAVNDRVESCDMSKLPAEDSSADIVIYCLSLMGTNLYDFIREARRVLKIGGILKIAEVTSRFVSIKQFCEAITKMGFEQSHRRELTDYFMMMEFKKVEKVEQKRPYGLKLKPCLYKKR.

Residues 1 to 123 form a disordered region; it reads MGKKRKITDE…NDDVAAAPEE (123 aa). Over residues 7 to 33 the composition is skewed to basic and acidic residues; the sequence is ITDEKDAQHVPAEKREKVENWLKKSTE. Composition is skewed to basic residues over residues 45–59 and 89–101; these read KKKR…KLAA and KKKR…KKKF. A compositionally biased stretch (acidic residues) spans 112-123; that stretch reads TENDDVAAAPEE. Residues His-169, Gly-204, Asp-224, Asp-236, Met-237, and Cys-253 each coordinate S-adenosyl-L-methionine.

Belongs to the methyltransferase superfamily. RRP8 family.

It is found in the nucleus. Its subcellular location is the nucleolus. Its function is as follows. Probable methyltransferase required to silence rDNA. Involved in regulation of antisense ribosomal siRNA production. Required for the N1-methyladenosine modification of 26S rRNAs. The protein is Ribosomal RNA-processing protein 8 (rrp-8) of Caenorhabditis elegans.